Consider the following 390-residue polypeptide: Aspergillopepsin-1 (390 aa).

Positions 1-19 (MVNTSLLAALTAYAVAVAA) are cleaved as a signal peptide. The propeptide at 20-67 (APTAPQVKGFSVNQVAVPKGVYRHPAAQLAKAYGKYHATVPTQVAAAA) is activation peptide. In terms of domain architecture, Peptidase A1 spans 84–387 (YITQVTVGDD…DASGPRLGFA (304 aa)). Active-site residues include Asp100 and Asp281.

This sequence belongs to the peptidase A1 family. As to quaternary structure, monomer.

It localises to the secreted. The enzyme catalyses Hydrolysis of proteins with broad specificity. Generally favors hydrophobic residues in P1 and P1', but also accepts Lys in P1, which leads to activation of trypsinogen. Does not clot milk.. With respect to regulation, inhibited by the microbial peptide pepstatin A. Secreted aspartic endopeptidase that allows assimilation of proteinaceous substrates. The scissile peptide bond is attacked by a nucleophilic water molecule activated by two aspartic residues in the active site. Shows a broad primary substrate specificity. Favors hydrophobic residues at the P1 and P1' positions, but also accepts a lysine residue in the P1 position, leading to the activation of trypsinogen and chymotrypsinogen A. Hydrolyzes myoglobin, hemoglobin and other natural proteins. Hydrolyzes equine myoglobin between positions 'Met-1' and 'Gly-2', 'Lys-43' and 'Phe-44', and 'Leu-70' and 'Thr-71'. The sequence is that of Aspergillopepsin-1 (pepA) from Aspergillus pseudoglaucus (Eurotium repens).